The following is a 149-amino-acid chain: Calmodulin (149 aa).

N-acetylalanine is present on alanine 2. EF-hand domains follow at residues 8–43 (EQIA…LGQN), 44–79 (PTEA…KMKD), 81–116 (DSEE…LGEK), and 117–149 (LTDE…MMSK). Ca(2+) contacts are provided by aspartate 21, aspartate 23, aspartate 25, threonine 27, glutamate 32, aspartate 57, aspartate 59, asparagine 61, threonine 63, glutamate 68, aspartate 94, aspartate 96, asparagine 98, and glutamate 105. Residue lysine 116 is modified to N6,N6,N6-trimethyllysine. Ca(2+) is bound by residues aspartate 130, aspartate 132, aspartate 134, glutamine 136, and glutamate 141.

This sequence belongs to the calmodulin family.

Its function is as follows. Calmodulin mediates the control of a large number of enzymes, ion channels and other proteins by Ca(2+). Among the enzymes to be stimulated by the calmodulin-Ca(2+) complex are a number of protein kinases and phosphatases. The polypeptide is Calmodulin (Lumbricus rubellus (Humus earthworm)).